The chain runs to 438 residues: Serine--tRNA ligase (438 aa).

Residue 243-245 participates in L-serine binding; sequence TAE. 274–276 lines the ATP pocket; that stretch reads RSE. Glu297 lines the L-serine pocket. 361 to 364 contributes to the ATP binding site; it reads EISS. Ser396 contributes to the L-serine binding site.

The protein belongs to the class-II aminoacyl-tRNA synthetase family. Type-1 seryl-tRNA synthetase subfamily. Homodimer. The tRNA molecule binds across the dimer.

Its subcellular location is the cytoplasm. The enzyme catalyses tRNA(Ser) + L-serine + ATP = L-seryl-tRNA(Ser) + AMP + diphosphate + H(+). It catalyses the reaction tRNA(Sec) + L-serine + ATP = L-seryl-tRNA(Sec) + AMP + diphosphate + H(+). It participates in aminoacyl-tRNA biosynthesis; selenocysteinyl-tRNA(Sec) biosynthesis; L-seryl-tRNA(Sec) from L-serine and tRNA(Sec): step 1/1. Its function is as follows. Catalyzes the attachment of serine to tRNA(Ser). Is also able to aminoacylate tRNA(Sec) with serine, to form the misacylated tRNA L-seryl-tRNA(Sec), which will be further converted into selenocysteinyl-tRNA(Sec). The protein is Serine--tRNA ligase of Ralstonia pickettii (strain 12J).